The sequence spans 147 residues: Cytochrome c-type biogenesis protein CcmE (147 aa).

Residues 1–9 (MKNLKKQRR) are Cytoplasmic-facing. The helical; Signal-anchor for type II membrane protein transmembrane segment at 10-30 (IQVIALATVALVLSTALIGYA) threads the bilayer. Topologically, residues 31 to 147 (MRDGINFFRA…EQGVYKGTEG (117 aa)) are periplasmic. Heme contacts are provided by His123 and Tyr127.

It belongs to the CcmE/CycJ family.

It is found in the cell inner membrane. In terms of biological role, heme chaperone required for the biogenesis of c-type cytochromes. Transiently binds heme delivered by CcmC and transfers the heme to apo-cytochromes in a process facilitated by CcmF and CcmH. This is Cytochrome c-type biogenesis protein CcmE from Roseobacter denitrificans (strain ATCC 33942 / OCh 114) (Erythrobacter sp. (strain OCh 114)).